Here is a 935-residue protein sequence, read N- to C-terminus: GPI ethanolamine phosphate transferase 1 (935 aa).

The Cytoplasmic segment spans residues 1–5; that stretch reads MFGRL. The helical transmembrane segment at 6-26 threads the bilayer; that stretch reads LLLGILFHVVFLKSIFDIYFV. Over 27–449 the chain is Lumenal; sequence TPLIHGMKQY…LQRYDWLLLR (423 aa). Residues asparagine 86, asparagine 134, asparagine 315, and asparagine 398 are each glycosylated (N-linked (GlcNAc...) asparagine). The chain crosses the membrane as a helical span at residues 450 to 470; sequence SIVFFGYLSWIGYVICFVFSL. Topologically, residues 471 to 483 are cytoplasmic; sequence NIEPSSKIVKPVS. Residues 484–503 form a helical membrane-spanning segment; that stretch reads VVKRVAFNIPFLLICIFFYI. Over 504–509 the chain is Lumenal; the sequence is QSSPPF. A helical transmembrane segment spans residues 510-530; the sequence is YYGYALFPTIFLQLIHSIFPN. The Cytoplasmic portion of the chain corresponds to 531–547; that stretch reads TKLGFKNFLTVAKQKHG. The chain crosses the membrane as a helical span at residues 548–568; it reads FSLLKILFISLCILCLLQFIV. Residues 569–576 lie on the Lumenal side of the membrane; it reads YSYFHREG. A helical transmembrane segment spans residues 577-597; sequence FSVILMGLAAWPWLLHADYAF. Topologically, residues 598–600 are cytoplasmic; it reads SHK. Residues 601-621 traverse the membrane as a helical segment; it reads TISVSWSVLTSLLCFFTILPV. Residues 622 to 626 are Lumenal-facing; sequence NKKES. The helical transmembrane segment at 627 to 647 threads the bilayer; sequence LLFIFAGGFAMSVAGVFYILY. Over 648–663 the chain is Cytoplasmic; the sequence is RRNQAFQYSSTVTNKQ. The helical transmembrane segment at 664 to 684 threads the bilayer; it reads LVLQVLIIMATVPVTLKIADS. The Lumenal portion of the chain corresponds to 685–688; the sequence is LQRN. The chain crosses the membrane as a helical span at residues 689-709; that stretch reads IAIPPILRLVAFGLFITSYII. At 710–737 the chain is on the cytoplasmic side; the sequence is PSHHIRSCKHYFLDRLAILFLTFSPTMC. Residues 738 to 758 form a helical membrane-spanning segment; sequence MLSISFEALFYVVLFITLGLW. The Lumenal portion of the chain corresponds to 759–792; sequence MELETELQKYTEQLHPEYSRKKDAKFHLSLSHIR. The chain crosses the membrane as a helical span at residues 793-813; it reads ISLFFYIFINVAFFGTGNVAS. Residues 814-835 lie on the Cytoplasmic side of the membrane; sequence LSTFALDSVKRFIPVFNPVTQG. Residues 836 to 856 form a helical membrane-spanning segment; that stretch reads ALLMYTILVPFIALSAAFGIM. Residues 857–865 are Lumenal-facing; that stretch reads NKRLGGIQQ. Residues 866-886 form a helical membrane-spanning segment; that stretch reads VTFFLAVGMADIVTINFFYLV. Residues 887 to 894 lie on the Cytoplasmic side of the membrane; it reads KDEGSWKD. The chain crosses the membrane as a helical span at residues 895–915; that stretch reads IGVSISHFCISNFLILFITAL. Residues 916–935 are Lumenal-facing; that stretch reads EHASAILCKNITYTIHEKVN. Asparagine 925 is a glycosylation site (N-linked (GlcNAc...) asparagine).

This sequence belongs to the PIGG/PIGN/PIGO family. PIGN subfamily.

The protein localises to the endoplasmic reticulum membrane. It participates in glycolipid biosynthesis; glycosylphosphatidylinositol-anchor biosynthesis. In terms of biological role, ethanolamine phosphate transferase involved in glycosylphosphatidylinositol-anchor biosynthesis. Transfers ethanolamine phosphate to the first alpha-1,4-linked mannose of the glycosylphosphatidylinositol precursor of GPI-anchor. The sequence is that of GPI ethanolamine phosphate transferase 1 (its8) from Schizosaccharomyces pombe (strain 972 / ATCC 24843) (Fission yeast).